The primary structure comprises 184 residues: GTP cyclohydrolase 1 (184 aa).

Zn(2+) is bound by residues C75, H78, and C146.

It belongs to the GTP cyclohydrolase I family. As to quaternary structure, homomer.

It catalyses the reaction GTP + H2O = 7,8-dihydroneopterin 3'-triphosphate + formate + H(+). It functions in the pathway cofactor biosynthesis; 7,8-dihydroneopterin triphosphate biosynthesis; 7,8-dihydroneopterin triphosphate from GTP: step 1/1. The sequence is that of GTP cyclohydrolase 1 from Streptococcus pneumoniae (strain Hungary19A-6).